A 132-amino-acid chain; its full sequence is Histone H2B.1 (132 aa).

A compositionally biased stretch (low complexity) spans 1–13 (MSAKASKAPASKA). A disordered region spans residues 1 to 39 (MSAKASKAPASKAPAEKKPAAKKTSSSTDPSKKRTKARK). Lys-7 carries the N6-acetyllysine; alternate modification. Residue Lys-7 forms a Glycyl lysine isopeptide (Lys-Gly) (interchain with G-Cter in SUMO); alternate linkage. Phosphoserine is present on Ser-11. Lys-12 carries the post-translational modification N6-acetyllysine. Lys-17 is subject to N6-acetyllysine; alternate. A Glycyl lysine isopeptide (Lys-Gly) (interchain with G-Cter in SUMO); alternate cross-link involves residue Lys-17. Residue Lys-18 forms a Glycyl lysine isopeptide (Lys-Gly) (interchain with G-Cter in SUMO) linkage. Lys-125 is covalently cross-linked (Glycyl lysine isopeptide (Lys-Gly) (interchain with G-Cter in ubiquitin)).

It belongs to the histone H2B family. The nucleosome is a histone octamer containing two molecules each of H2A, H2B, H3 and H4 assembled in one H3-H4 heterotetramer and two H2A-H2B heterodimers. The octamer wraps approximately 147 bp of DNA. Post-translationally, monoubiquitinated by the UBC2-BRE1 complex to form H2BK123ub1. H2BK123ub1 gives a specific tag for epigenetic transcriptional activation and is also prerequisite for H3K4me and H3K79me formation. H2BK123ub1 also modulates the formation of double-strand breaks during meiosis and is a prerequisite for DNA-damage checkpoint activation. In terms of processing, phosphorylated by STE20 to form H2BS10ph during progression through meiotic prophase. May be correlated with chromosome condensation. Acetylated by GCN5 to form H2BK11ac and H2BK16ac. H2BK16ac can also be formed by ESA1. Acetylation of N-terminal lysines and particularly formation of H2BK11acK16ac has a positive effect on transcription. Post-translationally, sumoylation to form H2BK6su and probably also H2BK16su or H2BK17su, occurs preferentially near the telomeres and represses gene transcription.

The protein resides in the nucleus. It is found in the chromosome. In terms of biological role, core component of nucleosome. Nucleosomes wrap and compact DNA into chromatin, limiting DNA accessibility to the cellular machineries which require DNA as a template. Histones thereby play a central role in transcription regulation, DNA repair, DNA replication and chromosomal stability. DNA accessibility is regulated via a complex set of post-translational modifications of histones, also called histone code, and nucleosome remodeling. The polypeptide is Histone H2B.1 (HTB1) (Kluyveromyces lactis (strain ATCC 8585 / CBS 2359 / DSM 70799 / NBRC 1267 / NRRL Y-1140 / WM37) (Yeast)).